The sequence spans 212 residues: Methylthioribulose-1-phosphate dehydratase (212 aa).

Residues histidine 97 and histidine 99 each contribute to the Zn(2+) site.

It belongs to the aldolase class II family. MtnB subfamily. In terms of assembly, homotetramer. It depends on Zn(2+) as a cofactor.

The catalysed reaction is 5-(methylsulfanyl)-D-ribulose 1-phosphate = 5-methylsulfanyl-2,3-dioxopentyl phosphate + H2O. It functions in the pathway amino-acid biosynthesis; L-methionine biosynthesis via salvage pathway; L-methionine from S-methyl-5-thio-alpha-D-ribose 1-phosphate: step 2/6. Its function is as follows. Catalyzes the dehydration of methylthioribulose-1-phosphate (MTRu-1-P) into 2,3-diketo-5-methylthiopentyl-1-phosphate (DK-MTP-1-P). In Bacillus cereus (strain ATCC 10987 / NRS 248), this protein is Methylthioribulose-1-phosphate dehydratase.